The following is a 398-amino-acid chain: 2-amino-3-ketobutyrate coenzyme A ligase (398 aa).

111-112 (CF) serves as a coordination point for pyridoxal 5'-phosphate. Histidine 136 provides a ligand contact to substrate. Pyridoxal 5'-phosphate-binding positions include serine 185, 210-213 (DDSH), 241-244 (TLGK), and 274-275 (SN). N6-(pyridoxal phosphate)lysine is present on lysine 244. A substrate-binding site is contributed by arginine 368.

This sequence belongs to the class-II pyridoxal-phosphate-dependent aminotransferase family. As to quaternary structure, homodimer. Requires pyridoxal 5'-phosphate as cofactor.

The enzyme catalyses glycine + acetyl-CoA = (2S)-2-amino-3-oxobutanoate + CoA. It participates in amino-acid degradation; L-threonine degradation via oxydo-reductase pathway; glycine from L-threonine: step 2/2. In terms of biological role, catalyzes the cleavage of 2-amino-3-ketobutyrate to glycine and acetyl-CoA. The sequence is that of 2-amino-3-ketobutyrate coenzyme A ligase from Salmonella typhimurium (strain LT2 / SGSC1412 / ATCC 700720).